Reading from the N-terminus, the 198-residue chain is MSKVLVLKSSILGGYSQSALLVDHLIGKWEDQGATITVRDLAGKDVLPMVDGEIASGLRGGDDLTARQQEMLDLSNALVEELKANDTIVITAPMYNFNIPTQLKNWIDFVARAGVTFTYTENGPKGLVEGKRAVLITTRGGAHKDGPTDHIVPFLKTFLGFIGITDVEVVYGEALNMGPEANQKGISEAKQSLDALTV.

FMN-binding positions include Ser10, 16 to 18 (SQS), 94 to 97 (MYNF), and 138 to 141 (TRGG).

The protein belongs to the azoreductase type 1 family. As to quaternary structure, homodimer. FMN serves as cofactor.

It catalyses the reaction 2 a quinone + NADH + H(+) = 2 a 1,4-benzosemiquinone + NAD(+). The enzyme catalyses N,N-dimethyl-1,4-phenylenediamine + anthranilate + 2 NAD(+) = 2-(4-dimethylaminophenyl)diazenylbenzoate + 2 NADH + 2 H(+). Its function is as follows. Quinone reductase that provides resistance to thiol-specific stress caused by electrophilic quinones. Functionally, also exhibits azoreductase activity. Catalyzes the reductive cleavage of the azo bond in aromatic azo compounds to the corresponding amines. The sequence is that of FMN-dependent NADH:quinone oxidoreductase from Shewanella sp. (strain MR-4).